Reading from the N-terminus, the 418-residue chain is MGQPGNRSVFLLAPNGSHAPDQDVPQERDEAWVVGMAIVMSLIVLAIVFGNVLVITAIAKFERLQTVTNYFITSLACADLVMGLAVVPFGASHILMKMWTFGSFWCEFWISIDVLCVTASIETLCVIAVDRYLAITSPFKYQCLLTKNKARVVILMVWVVSGLISFLPIKMHWYQATHREALNCYAEEACCDFFTNQPYAIASSIVSFYLPLVVMVFVYSRVFQVARRQLQKIDKSEGRFHAQNLSQAEQDGRSGPGHRRSSKFCLKEHKALKTLGIIMGTFTLCWLPFFIVNIVHGIHDNLIPKEVYILLNWVGYVNSAFNPLIYCRSPDFRMAFQELLCLHRSSLKAYGNGCSSNSNGRTDYTGEQSGCYLGEEKDSERLCEDAPGPEGCAHRQGTVPDDSTDSQGRNCSTNDSML.

Residues M1–V34 are Extracellular-facing. N6 and N15 each carry an N-linked (GlcNAc...) asparagine glycan. Residues G35 to I58 traverse the membrane as a helical segment. Residues A59–F71 are Cytoplasmic-facing. The chain crosses the membrane as a helical span at residues I72 to L95. Over M96 to C106 the chain is Extracellular. Cystine bridges form between C106–C191 and C184–C190. Residues E107–V129 form a helical membrane-spanning segment. Topologically, residues D130 to A150 are cytoplasmic. A Phosphotyrosine modification is found at Y141. The helical transmembrane segment at R151–Y174 threads the bilayer. Topologically, residues Q175–N196 are extracellular. The chain crosses the membrane as a helical span at residues Q197–S220. The Cytoplasmic segment spans residues R221–T274. S246 bears the Phosphoserine mark. A phosphoserine; by PKA mark is found at S261 and S262. C265 carries the S-palmitoyl cysteine lipid modification. Residues L275–I298 form a helical membrane-spanning segment. At H299–K305 the chain is on the extracellular side. Residues E306–S329 traverse the membrane as a helical segment. Topologically, residues P330 to L418 are cytoplasmic. The S-palmitoyl cysteine moiety is linked to residue C341. 2 positions are modified to phosphoserine; by PKA: S345 and S346. S355 and S356 each carry phosphoserine; by BARK. The disordered stretch occupies residues R381–L418. 2 positions are modified to 4-hydroxyproline: P387 and P400. The segment covering D405–L418 has biased composition (polar residues). A PDZ-binding motif is present at residues D415–L418.

Belongs to the G-protein coupled receptor 1 family. Adrenergic receptor subfamily. ADRB2 sub-subfamily. As to quaternary structure, binds NHERF1 and GPRASP1. Interacts with ARRB1 and ARRB2. Interacts with SRC. Interacts with USP20 and USP33. Interacts with VHL; the interaction, which is increased on hydroxylation of ADRB2, ubiquitinates ADRB2 leading to its degradation. Interacts with EGLN3; the interaction hydroxylates ADRB2 facilitating VHL-E3 ligase-mediated ubiquitination. Interacts (via PDZ-binding motif) with SNX27 (via PDZ domain); the interaction is required when endocytosed to prevent degradation in lysosomes and promote recycling to the plasma membrane. Interacts with CNIH4. Interacts with ARRDC3. Interacts with NEDD4. Interacts with MARCHF2. Post-translationally, palmitoylated; may reduce accessibility of Ser-345 and Ser-346 by anchoring Cys-341 to the plasma membrane. Agonist stimulation promotes depalmitoylation and further allows Ser-345 and Ser-346 phosphorylation. Phosphorylated by PKA and BARK upon agonist stimulation, which mediates homologous desensitization of the receptor. PKA-mediated phosphorylation seems to facilitate phosphorylation by BARK. In terms of processing, phosphorylation of Tyr-141 is induced by insulin and leads to supersensitization of the receptor. Post-translationally, polyubiquitinated. Agonist-induced ubiquitination leads to sort internalized receptors to the lysosomes for degradation. Deubiquitination by USP20 and USP33, leads to ADRB2 recycling and resensitization after prolonged agonist stimulation. USP20 and USP33 are constitutively associated and are dissociated immediately after agonist stimulation. Ubiquitination by the VHL-E3 ligase complex is oxygen-dependent. Hydroxylation by EGLN3 occurs only under normoxia and increases the interaction with VHL and the subsequent ubiquitination and degradation of ADRB2. In terms of processing, palmitoylated. Mainly palmitoylated at Cys-341. Palmitoylation may reduce accessibility of phosphorylation sites by anchoring the receptor to the plasma membrane. Agonist stimulation promotes depalmitoylation and further allows Ser-345 and Ser-346 phosphorylation. Also undergoes transient, ligand-induced palmitoylation at Cys-265 probably by ZDHHC9, ZDHHC14 and ZDHHC18 within the Golgi. Palmitoylation at Cys-265 requires phosphorylation by PKA and receptor internalization and stabilizes the receptor. Could be depalmitoylated by LYPLA1 at the plasma membrane. Expressed in heart, liver, lung, skeletal muscle and subcutaneous adipose tissue.

Its subcellular location is the cell membrane. The protein localises to the early endosome. It is found in the golgi apparatus. Functionally, beta-adrenergic receptors mediate the catecholamine-induced activation of adenylate cyclase through the action of G proteins. The beta-2-adrenergic receptor binds epinephrine with an approximately 30-fold greater affinity than it does norepinephrine. This chain is Beta-2 adrenergic receptor (ADRB2), found in Sus scrofa (Pig).